The chain runs to 92 residues: Large ribosomal subunit protein uL24c (92 aa).

It belongs to the universal ribosomal protein uL24 family. As to quaternary structure, part of the 50S ribosomal subunit.

Its subcellular location is the plastid. It is found in the chloroplast. In terms of biological role, one of two assembly initiator proteins, it binds directly to the 5'-end of the 23S rRNA, where it nucleates assembly of the 50S subunit. This Gracilaria tenuistipitata var. liui (Red alga) protein is Large ribosomal subunit protein uL24c (rpl24).